A 264-amino-acid polypeptide reads, in one-letter code: uncharacterized protein (264 aa).

4 helical membrane-spanning segments follow: residues 43-63 (VVAA…LYLI), 68-88 (FLPS…LLGI), 96-116 (ILPA…LGCI), and 150-170 (LAAK…VLAV). The disordered stretch occupies residues 216–247 (SYEDALKNSSQQPSTSSSSSSPPSRPPHSVYT). Residues 224-237 (SSQQPSTSSSSSSP) are compositionally biased toward low complexity.

Its subcellular location is the membrane. This is an uncharacterized protein from Caenorhabditis elegans.